Reading from the N-terminus, the 843-residue chain is Glycogen phosphorylase, brain form (843 aa).

A2 bears the N-acetylalanine mark. At S15 the chain carries Phosphoserine; by PHK; in form phosphorylase A. Positions 43, 197, and 310 each coordinate AMP. At Y197 the chain carries Phosphotyrosine. A Phosphotyrosine modification is found at Y473. At S524 the chain carries Phosphoserine. K569 is a pyridoxal 5'-phosphate binding site. The segment at 677–678 (TG) is pyridoxal 5'-phosphate. Position 681 is an N6-(pyridoxal phosphate)lysine (K681).

Belongs to the glycogen phosphorylase family. In terms of assembly, homodimer. Dimers associate into a tetramer to form the enzymatically active phosphorylase A. Requires pyridoxal 5'-phosphate as cofactor. Post-translationally, phosphorylation of Ser-15 converts phosphorylase B (unphosphorylated) to phosphorylase A.

The catalysed reaction is [(1-&gt;4)-alpha-D-glucosyl](n) + phosphate = [(1-&gt;4)-alpha-D-glucosyl](n-1) + alpha-D-glucose 1-phosphate. Its activity is regulated as follows. Activity of phosphorylase is controlled both by allosteric means (through the non-covalent binding of metabolites) and by covalent modification. Thus AMP allosterically activates, whereas ATP, ADP, and glucose-6-phosphate allosterically inhibit, phosphorylase B. Functionally, glycogen phosphorylase that regulates glycogen mobilization. Phosphorylase is an important allosteric enzyme in carbohydrate metabolism. Enzymes from different sources differ in their regulatory mechanisms and in their natural substrates. However, all known phosphorylases share catalytic and structural properties. This chain is Glycogen phosphorylase, brain form (Pygb), found in Mus musculus (Mouse).